Here is a 198-residue protein sequence, read N- to C-terminus: UPF0098 protein PH1269 (198 aa).

The protein belongs to the UPF0098 family.

The protein is UPF0098 protein PH1269 of Pyrococcus horikoshii (strain ATCC 700860 / DSM 12428 / JCM 9974 / NBRC 100139 / OT-3).